Reading from the N-terminus, the 558-residue chain is Mitochondrial nucleoid-associated protein 1 (558 aa).

The Extracellular portion of the chain corresponds to 1 to 527 (MGAAEPRMEV…VQCNTTIKKS (527 aa)). Disordered stretches follow at residues 29-88 (KMRG…SWTA), 130-205 (LQRV…KLGT), and 222-269 (LSDR…KTQK). Over residues 36-45 (SADQNVSQSK) the composition is skewed to polar residues. A compositionally biased stretch (basic and acidic residues) spans 51–81 (QKEKSPTRDLTRAKEKELEVDRPKRAVKAET). Polar residues-rich tracts occupy residues 131–144 (QRVT…SDAT) and 187–197 (SSTQPHANPAT). Residues 528 to 548 (GVGGLTMLFAGYFILCCNWSF) form a helical membrane-spanning segment. Topologically, residues 549-558 (KHLKLQHWRK) are cytoplasmic.

It is found in the mitochondrion inner membrane. It localises to the mitochondrion matrix. The protein resides in the mitochondrion nucleoid. Functionally, critical regulator of mitochondrial DNA (mtDNA) abundance. Binds dsDNA throughout the mitochondrial genome without sequence specificity and controls mtDNA copy number by promoting its replication. Also plays important roles in mitochondrial metabolism and cell proliferation. This chain is Mitochondrial nucleoid-associated protein 1, found in Mus musculus (Mouse).